Reading from the N-terminus, the 162-residue chain is General odorant-binding protein 2 (162 aa).

The signal sequence occupies residues 1 to 18 (MTSKSCLLLVAMVTLTTS). 3 cysteine pairs are disulfide-bonded: C40/C75, C71/C129, and C118/C138.

The protein belongs to the PBP/GOBP family. In terms of tissue distribution, antenna.

Functionally, present in the aqueous fluid surrounding olfactory sensory dendrites and are thought to aid in the capture and transport of hydrophobic odorants into and through this fluid. This Heliothis virescens (Tobacco budworm moth) protein is General odorant-binding protein 2.